The primary structure comprises 100 residues: MAKQIAGICELCGRSDVQLTEHHLTPKEEGGTFLPTAMLCIPCHKQIHALYTNQELAVRLNGMAELRSDPELARFVKWIRKQPPEKLIKTKKSNERKKKK.

This is an uncharacterized protein from Bacillus subtilis (strain 168).